The primary structure comprises 506 residues: CTL-like protein DDB_G0269978 (506 aa).

N-linked (GlcNAc...) asparagine glycosylation is found at asparagine 15 and asparagine 41. 12 helical membrane-spanning segments follow: residues 91–111, 126–146, 161–181, 182–202, 226–246, 256–276, 279–299, 323–343, 345–367, 371–393, 416–436, and 447–467; these read LLYS…TVIA, LQGL…FLIW, SFFS…GNGW, YSWA…YFAF, TLLV…IWLF, SYWT…LYWT, VITY…YFFA, FGSI…QFIC, GFAR…ALIF, LYTF…CNSS, ITML…VTMI, and WLYV…DIIF.

The protein belongs to the CTL (choline transporter-like) family.

The protein resides in the membrane. The sequence is that of CTL-like protein DDB_G0269978 from Dictyostelium discoideum (Social amoeba).